Here is a 429-residue protein sequence, read N- to C-terminus: Serine hydroxymethyltransferase (429 aa).

120–122 (GHI) provides a ligand contact to (6S)-5,6,7,8-tetrahydrofolate. N6-(pyridoxal phosphate)lysine is present on Lys-226.

This sequence belongs to the SHMT family. As to quaternary structure, homodimer. Pyridoxal 5'-phosphate serves as cofactor.

Its subcellular location is the cytoplasm. It catalyses the reaction 5,10-methylenetetrahydromethanopterin + glycine + H2O = 5,6,7,8-tetrahydromethanopterin + L-serine. The catalysed reaction is L-allo-threonine = acetaldehyde + glycine. It participates in amino-acid biosynthesis; glycine biosynthesis; glycine from L-serine: step 1/1. In terms of biological role, catalyzes the reversible interconversion of serine and glycine with tetrahydromethanopterin (H4MPT) serving as the one-carbon carrier. The use of tetrahydrofolate (THF or H4PteGlu) as the pteridine substrate is 450-fold less efficient than that of H4MPT. Also exhibits a pteridine-independent aldolase activity toward beta-hydroxyamino acids, producing glycine and aldehydes, via a retro-aldol mechanism. Thus, is able to catalyze the cleavage of L-allo-threonine and L-threo-beta-phenylserine. The chain is Serine hydroxymethyltransferase from Methanocaldococcus jannaschii (strain ATCC 43067 / DSM 2661 / JAL-1 / JCM 10045 / NBRC 100440) (Methanococcus jannaschii).